Here is a 387-residue protein sequence, read N- to C-terminus: Succinate--CoA ligase [ADP-forming] subunit beta (387 aa).

The ATP-grasp domain occupies 9–236; the sequence is KELFAKHNVP…RAATDPLELK (228 aa). Residues lysine 45, 52-54, serine 94, and glutamate 99 contribute to the ATP site; that span reads GRG. Positions 191 and 205 each coordinate Mg(2+). Residues asparagine 256 and 318-320 each bind substrate; that span reads GIT.

It belongs to the succinate/malate CoA ligase beta subunit family. As to quaternary structure, heterotetramer of two alpha and two beta subunits. Mg(2+) is required as a cofactor.

It carries out the reaction succinate + ATP + CoA = succinyl-CoA + ADP + phosphate. The catalysed reaction is GTP + succinate + CoA = succinyl-CoA + GDP + phosphate. The protein operates within carbohydrate metabolism; tricarboxylic acid cycle; succinate from succinyl-CoA (ligase route): step 1/1. Functionally, succinyl-CoA synthetase functions in the citric acid cycle (TCA), coupling the hydrolysis of succinyl-CoA to the synthesis of either ATP or GTP and thus represents the only step of substrate-level phosphorylation in the TCA. The beta subunit provides nucleotide specificity of the enzyme and binds the substrate succinate, while the binding sites for coenzyme A and phosphate are found in the alpha subunit. This is Succinate--CoA ligase [ADP-forming] subunit beta from Mycobacterium bovis (strain ATCC BAA-935 / AF2122/97).